The following is a 108-amino-acid chain: Large ribosomal subunit protein P1B (108 aa).

Low complexity predominate over residues Ala72–Ala84. The tract at residues Ala72 to Asp108 is disordered. Residues Ala85 to Met102 show a composition bias toward acidic residues.

It belongs to the eukaryotic ribosomal protein P1/P2 family. P1 and P2 exist as dimers at the large ribosomal subunit. In terms of processing, phosphorylated.

Functionally, plays an important role in the elongation step of protein synthesis. The polypeptide is Large ribosomal subunit protein P1B (RPP1B) (Candida albicans (Yeast)).